A 441-amino-acid polypeptide reads, in one-letter code: FAM10 family protein At4g22670 (441 aa).

Residues 41–114 (KIPTGVHEED…PQKMGDSSVE (74 aa)) are disordered. Basic and acidic residues predominate over residues 46–55 (VHEEDKDTKP). Acidic residues-rich tracts occupy residues 61 to 71 (EESDDDMDETE) and 78 to 102 (EEEE…EPDN). 2 positions are modified to phosphoserine: serine 63 and serine 89. TPR repeat units follow at residues 121-156 (EAAQ…NPTS), 158-190 (IMYG…NPDS), and 191-224 (AKGY…DYDE). Residues 236–285 (NAHKLEEHRRKYDRLRKEREDKKAERDRLRRRAEAQAAYDKAKKEEQSSS) adopt a coiled-coil conformation. The segment covering 244-282 (RRKYDRLRKEREDKKAERDRLRRRAEAQAAYDKAKKEEQ) has biased composition (basic and acidic residues). The disordered stretch occupies residues 244-314 (RRKYDRLRKE…MPGGFPGGMG (71 aa)). Over residues 289–314 (SGGGFPGGMPGGFPGGMPGGFPGGMG) the composition is skewed to gly residues. An STI1 domain is found at 391–430 (DPELMTAFSDPEVMAALQDVMKNPANLAKHQANPKVAPVI).

The protein belongs to the FAM10 family.

In Arabidopsis thaliana (Mouse-ear cress), this protein is FAM10 family protein At4g22670.